Consider the following 501-residue polypeptide: Glutamate--tRNA ligase (501 aa).

Positions 10-20 (PSPTGSLHIGG) match the 'HIGH' region motif. The 'KMSKS' region motif lies at 251 to 255 (KLSKR). Lys-254 contributes to the ATP binding site.

It belongs to the class-I aminoacyl-tRNA synthetase family. Glutamate--tRNA ligase type 1 subfamily. Monomer.

It is found in the cytoplasm. It catalyses the reaction tRNA(Glu) + L-glutamate + ATP = L-glutamyl-tRNA(Glu) + AMP + diphosphate. Functionally, catalyzes the attachment of glutamate to tRNA(Glu) in a two-step reaction: glutamate is first activated by ATP to form Glu-AMP and then transferred to the acceptor end of tRNA(Glu). The sequence is that of Glutamate--tRNA ligase from Desulforudis audaxviator (strain MP104C).